We begin with the raw amino-acid sequence, 291 residues long: Signal peptidase I (291 aa).

Residues 1-45 are Cytoplasmic-facing; sequence MTMKKLTSTTTTLWDNKLFINNLKNFMQTNTESNNNKTTAQEWKS. Residues 46–66 form a helical membrane-spanning segment; it reads FILVVVIALMIRILIIESFVV. Topologically, residues 67-291 are periplasmic; sequence PTGSMKATIL…IFRNLYSIED (225 aa). Active-site residues include Ser70 and Lys133.

It belongs to the peptidase S26 family.

It is found in the cell inner membrane. The enzyme catalyses Cleavage of hydrophobic, N-terminal signal or leader sequences from secreted and periplasmic proteins.. The polypeptide is Signal peptidase I (lepB) (Rickettsia bellii (strain RML369-C)).